A 469-amino-acid polypeptide reads, in one-letter code: UDP-N-acetylmuramoylalanine--D-glutamate ligase (469 aa).

ATP is bound at residue 110–116 (GTNGKST).

It belongs to the MurCDEF family.

The protein resides in the cytoplasm. It carries out the reaction UDP-N-acetyl-alpha-D-muramoyl-L-alanine + D-glutamate + ATP = UDP-N-acetyl-alpha-D-muramoyl-L-alanyl-D-glutamate + ADP + phosphate + H(+). It participates in cell wall biogenesis; peptidoglycan biosynthesis. Its function is as follows. Cell wall formation. Catalyzes the addition of glutamate to the nucleotide precursor UDP-N-acetylmuramoyl-L-alanine (UMA). This Synechococcus sp. (strain JA-3-3Ab) (Cyanobacteria bacterium Yellowstone A-Prime) protein is UDP-N-acetylmuramoylalanine--D-glutamate ligase.